The primary structure comprises 255 residues: Imidazole glycerol phosphate synthase subunit HisF (255 aa).

Residues Asp12 and Asp131 contribute to the active site.

This sequence belongs to the HisA/HisF family. In terms of assembly, heterodimer of HisH and HisF.

Its subcellular location is the cytoplasm. The enzyme catalyses 5-[(5-phospho-1-deoxy-D-ribulos-1-ylimino)methylamino]-1-(5-phospho-beta-D-ribosyl)imidazole-4-carboxamide + L-glutamine = D-erythro-1-(imidazol-4-yl)glycerol 3-phosphate + 5-amino-1-(5-phospho-beta-D-ribosyl)imidazole-4-carboxamide + L-glutamate + H(+). It functions in the pathway amino-acid biosynthesis; L-histidine biosynthesis; L-histidine from 5-phospho-alpha-D-ribose 1-diphosphate: step 5/9. Its function is as follows. IGPS catalyzes the conversion of PRFAR and glutamine to IGP, AICAR and glutamate. The HisF subunit catalyzes the cyclization activity that produces IGP and AICAR from PRFAR using the ammonia provided by the HisH subunit. In Sphingopyxis alaskensis (strain DSM 13593 / LMG 18877 / RB2256) (Sphingomonas alaskensis), this protein is Imidazole glycerol phosphate synthase subunit HisF.